The following is a 132-amino-acid chain: D-ribose pyranase (132 aa).

His-20 acts as the Proton donor in catalysis. Substrate-binding positions include Asp-28, His-99, and 121–123 (YSN).

It belongs to the RbsD / FucU family. RbsD subfamily. As to quaternary structure, homodecamer.

It localises to the cytoplasm. It carries out the reaction beta-D-ribopyranose = beta-D-ribofuranose. It participates in carbohydrate metabolism; D-ribose degradation; D-ribose 5-phosphate from beta-D-ribopyranose: step 1/2. Functionally, catalyzes the interconversion of beta-pyran and beta-furan forms of D-ribose. The polypeptide is D-ribose pyranase (Lactococcus lactis subsp. cremoris (strain SK11)).